A 259-amino-acid polypeptide reads, in one-letter code: Phosphatidylglycerol--prolipoprotein diacylglyceryl transferase (259 aa).

The next 4 membrane-spanning stretches (helical) occupy residues 10-30 (IGLLEIRWYSLAYIIGILFAY), 50-70 (IISWWVTGMILGGRIGYILFY), 86-106 (WKGGMSFHGASLGLFCTMYIF), and 112-132 (IKFLSAIDLCLCAVPVGIFLG). Arg-133 is a binding site for a 1,2-diacyl-sn-glycero-3-phospho-(1'-sn-glycerol). 3 helical membrane passes run 169–189 (LYEAFFEGLLLFVVMNLLFFF), 197–217 (GMLFTIFMIWYGIVRFFIEFV), and 227–247 (ILFNWITMGQLLSFIMVILGI).

The protein belongs to the Lgt family.

The protein resides in the cell inner membrane. It catalyses the reaction L-cysteinyl-[prolipoprotein] + a 1,2-diacyl-sn-glycero-3-phospho-(1'-sn-glycerol) = an S-1,2-diacyl-sn-glyceryl-L-cysteinyl-[prolipoprotein] + sn-glycerol 1-phosphate + H(+). Its pathway is protein modification; lipoprotein biosynthesis (diacylglyceryl transfer). Its function is as follows. Catalyzes the transfer of the diacylglyceryl group from phosphatidylglycerol to the sulfhydryl group of the N-terminal cysteine of a prolipoprotein, the first step in the formation of mature lipoproteins. The protein is Phosphatidylglycerol--prolipoprotein diacylglyceryl transferase of Ehrlichia ruminantium (strain Gardel).